The primary structure comprises 733 residues: Phosphoribosylformylglycinamidine synthase subunit PurL (733 aa).

Histidine 41 is a catalytic residue. ATP-binding residues include tyrosine 44 and lysine 83. Glutamate 85 serves as a coordination point for Mg(2+). Residues serine 86–histidine 89 and arginine 108 each bind substrate. The active-site Proton acceptor is the histidine 87. Aspartate 109 provides a ligand contact to Mg(2+). The segment at glycine 212 to glutamine 232 is disordered. Glutamine 232 contributes to the substrate binding site. Aspartate 260 serves as a coordination point for Mg(2+). Glutamate 304–glutamine 306 is a substrate binding site. ATP-binding residues include aspartate 488 and glycine 525. Asparagine 526 provides a ligand contact to Mg(2+). Serine 528 serves as a coordination point for substrate.

It belongs to the FGAMS family. In terms of assembly, monomer. Part of the FGAM synthase complex composed of 1 PurL, 1 PurQ and 2 PurS subunits.

It localises to the cytoplasm. The catalysed reaction is N(2)-formyl-N(1)-(5-phospho-beta-D-ribosyl)glycinamide + L-glutamine + ATP + H2O = 2-formamido-N(1)-(5-O-phospho-beta-D-ribosyl)acetamidine + L-glutamate + ADP + phosphate + H(+). Its pathway is purine metabolism; IMP biosynthesis via de novo pathway; 5-amino-1-(5-phospho-D-ribosyl)imidazole from N(2)-formyl-N(1)-(5-phospho-D-ribosyl)glycinamide: step 1/2. Its function is as follows. Part of the phosphoribosylformylglycinamidine synthase complex involved in the purines biosynthetic pathway. Catalyzes the ATP-dependent conversion of formylglycinamide ribonucleotide (FGAR) and glutamine to yield formylglycinamidine ribonucleotide (FGAM) and glutamate. The FGAM synthase complex is composed of three subunits. PurQ produces an ammonia molecule by converting glutamine to glutamate. PurL transfers the ammonia molecule to FGAR to form FGAM in an ATP-dependent manner. PurS interacts with PurQ and PurL and is thought to assist in the transfer of the ammonia molecule from PurQ to PurL. The polypeptide is Phosphoribosylformylglycinamidine synthase subunit PurL (Thermoanaerobacter pseudethanolicus (strain ATCC 33223 / 39E) (Clostridium thermohydrosulfuricum)).